The chain runs to 349 residues: S-adenosylmethionine:tRNA ribosyltransferase-isomerase (349 aa).

Belongs to the QueA family. In terms of assembly, monomer.

It is found in the cytoplasm. It catalyses the reaction 7-aminomethyl-7-carbaguanosine(34) in tRNA + S-adenosyl-L-methionine = epoxyqueuosine(34) in tRNA + adenine + L-methionine + 2 H(+). It functions in the pathway tRNA modification; tRNA-queuosine biosynthesis. Transfers and isomerizes the ribose moiety from AdoMet to the 7-aminomethyl group of 7-deazaguanine (preQ1-tRNA) to give epoxyqueuosine (oQ-tRNA). The chain is S-adenosylmethionine:tRNA ribosyltransferase-isomerase from Parabacteroides distasonis (strain ATCC 8503 / DSM 20701 / CIP 104284 / JCM 5825 / NCTC 11152).